Here is a 373-residue protein sequence, read N- to C-terminus: Chaperone protein DnaJ (373 aa).

The 65-residue stretch at 4 to 68 (NYYQILGVSK…QKRAAYDRLG (65 aa)) folds into the J domain. The CR-type zinc finger occupies 136 to 214 (GIEKNISFSS…CHGMGRYHKQ (79 aa)). Zn(2+)-binding residues include cysteine 149, cysteine 152, cysteine 166, cysteine 169, cysteine 188, cysteine 191, cysteine 202, and cysteine 205. 4 CXXCXGXG motif repeats span residues 149–156 (CDTCHGSG), 166–173 (CDACSGVG), 188–195 (CHKCQGNG), and 202–209 (CKKCHGMG).

This sequence belongs to the DnaJ family. As to quaternary structure, homodimer. The cofactor is Zn(2+).

It localises to the cytoplasm. Its function is as follows. Participates actively in the response to hyperosmotic and heat shock by preventing the aggregation of stress-denatured proteins and by disaggregating proteins, also in an autonomous, DnaK-independent fashion. Unfolded proteins bind initially to DnaJ; upon interaction with the DnaJ-bound protein, DnaK hydrolyzes its bound ATP, resulting in the formation of a stable complex. GrpE releases ADP from DnaK; ATP binding to DnaK triggers the release of the substrate protein, thus completing the reaction cycle. Several rounds of ATP-dependent interactions between DnaJ, DnaK and GrpE are required for fully efficient folding. Also involved, together with DnaK and GrpE, in the DNA replication of plasmids through activation of initiation proteins. This is Chaperone protein DnaJ from Rickettsia africae (strain ESF-5).